Consider the following 359-residue polypeptide: Dual-specificity RNA methyltransferase RlmN (359 aa).

Glu-102 functions as the Proton acceptor in the catalytic mechanism. The 244-residue stretch at Glu-108 to Gln-351 folds into the Radical SAM core domain. A disulfide bond links Cys-115 and Cys-354. Positions 122, 126, and 129 each coordinate [4Fe-4S] cluster. Residues Gly-178–Glu-179, Ser-210, Ser-232–His-234, and Asn-311 contribute to the S-adenosyl-L-methionine site. The active-site S-methylcysteine intermediate is Cys-354.

The protein belongs to the radical SAM superfamily. RlmN family. [4Fe-4S] cluster serves as cofactor.

Its subcellular location is the cytoplasm. It carries out the reaction adenosine(2503) in 23S rRNA + 2 reduced [2Fe-2S]-[ferredoxin] + 2 S-adenosyl-L-methionine = 2-methyladenosine(2503) in 23S rRNA + 5'-deoxyadenosine + L-methionine + 2 oxidized [2Fe-2S]-[ferredoxin] + S-adenosyl-L-homocysteine. The enzyme catalyses adenosine(37) in tRNA + 2 reduced [2Fe-2S]-[ferredoxin] + 2 S-adenosyl-L-methionine = 2-methyladenosine(37) in tRNA + 5'-deoxyadenosine + L-methionine + 2 oxidized [2Fe-2S]-[ferredoxin] + S-adenosyl-L-homocysteine. Specifically methylates position 2 of adenine 2503 in 23S rRNA and position 2 of adenine 37 in tRNAs. m2A2503 modification seems to play a crucial role in the proofreading step occurring at the peptidyl transferase center and thus would serve to optimize ribosomal fidelity. The protein is Dual-specificity RNA methyltransferase RlmN of Buchnera aphidicola subsp. Cinara cedri (strain Cc).